Here is a 1617-residue protein sequence, read N- to C-terminus: Mitogen-activated protein kinase kinae kinase bck1 (1617 aa).

9 disordered regions span residues 1–73 (MDGQ…SQLQ), 167–199 (GPVH…RTMP), 211–253 (SVAS…GGMS), 345–399 (RQIH…SPNL), 455–555 (DHRR…SSSY), 568–633 (KRSK…LRGK), 739–820 (GVPL…ISPE), 832–1144 (EHKR…RGDI), and 1164–1277 (DIDL…EILR). Over residues 19-28 (TQPSQSHMLS) the composition is skewed to low complexity. Residues 44–60 (VMPPPPPGPPPGPPPGP) show a composition bias toward pro residues. Over residues 220-248 (TAQNHQSQTGQTNEPTKSPSHRQNNSNTL) the composition is skewed to polar residues. Polar residues predominate over residues 482–504 (KSGSPATQHATLNQGLSSSSTGD). The span at 524–533 (RYYESRKGQE) shows a compositional bias: basic and acidic residues. Polar residues-rich tracts occupy residues 535–555 (IRPS…SSSY) and 586–596 (ESPTSPVNLRQ). Composition is skewed to basic and acidic residues over residues 832 to 841 (EHKREVERKQ) and 871 to 885 (FDER…KKAD). 2 stretches are compositionally biased toward polar residues: residues 897–907 (PQESYTLTRIN) and 956–980 (GGKQ…PQSS). Composition is skewed to basic and acidic residues over residues 1128-1140 (EDER…DSFA) and 1189-1198 (PENDLHKKEN). 2 stretches are compositionally biased toward polar residues: residues 1199 to 1208 (QPSSSYTGEM) and 1257 to 1272 (NQAS…NQKS). The 274-residue stretch at 1323-1596 (IIRGQLIGKG…QTLLTRHPFC (274 aa)) folds into the Protein kinase domain. ATP-binding positions include 1329-1337 (IGKGTYGRV) and K1352. D1453 functions as the Proton acceptor in the catalytic mechanism.

The protein belongs to the protein kinase superfamily. STE Ser/Thr protein kinase family. MAP kinase kinase subfamily.

The catalysed reaction is L-seryl-[protein] + ATP = O-phospho-L-seryl-[protein] + ADP + H(+). The enzyme catalyses L-threonyl-[protein] + ATP = O-phospho-L-threonyl-[protein] + ADP + H(+). Its function is as follows. Mitogen-activated kinase kinase kinase (MAPKKK), part of the cell wall integrity (CWI) signaling pathway composed by three protein kinases bck1, mkk2 and mpkA and responsible for the maintaining of cell-wall integrity balance. The CWI pathway also regulates the oxidative stress response, as well as the production of some secondary metabolites including pyomelanin. This is Mitogen-activated protein kinase kinae kinase bck1 from Aspergillus fumigatus (strain CBS 144.89 / FGSC A1163 / CEA10) (Neosartorya fumigata).